The primary structure comprises 737 residues: Probable serine/threonine-protein kinase DDB_G0269628 (737 aa).

The Protein kinase domain occupies 8–488; it reads YKLIKDLRSG…TLQKMDTSLL (481 aa). Residues 14–22 and Lys-36 contribute to the ATP site; that span reads LRSGGEGKA. 2 disordered regions span residues 155–251 and 278–298; these read NTIQ…KKCS and TTAA…SSSN. Residues 156–167 show a composition bias toward polar residues; the sequence is TIQHSHSSSSLV. The span at 168–229 shows a compositional bias: low complexity; it reads NGTTSPTNAT…PSSPSSPLSP (62 aa). The Proton acceptor role is filled by Asp-349.

The protein belongs to the protein kinase superfamily. NEK Ser/Thr protein kinase family. NIMA subfamily.

The enzyme catalyses L-seryl-[protein] + ATP = O-phospho-L-seryl-[protein] + ADP + H(+). The catalysed reaction is L-threonyl-[protein] + ATP = O-phospho-L-threonyl-[protein] + ADP + H(+). In Dictyostelium discoideum (Social amoeba), this protein is Probable serine/threonine-protein kinase DDB_G0269628.